Consider the following 102-residue polypeptide: Small ribosomal subunit protein uS10 (102 aa).

The protein belongs to the universal ribosomal protein uS10 family. In terms of assembly, part of the 30S ribosomal subunit.

Its function is as follows. Involved in the binding of tRNA to the ribosomes. The chain is Small ribosomal subunit protein uS10 from Bartonella henselae (strain ATCC 49882 / DSM 28221 / CCUG 30454 / Houston 1) (Rochalimaea henselae).